The chain runs to 401 residues: Argininosuccinate synthase (401 aa).

Residues 11–19 and alanine 38 each bind ATP; that span reads AYSGGLDTS. Residues tyrosine 89 and serine 94 each coordinate L-citrulline. Glycine 119 lines the ATP pocket. Positions 121, 125, and 126 each coordinate L-aspartate. Residue asparagine 125 participates in L-citrulline binding. Residues arginine 129, serine 177, serine 186, glutamate 262, and tyrosine 274 each coordinate L-citrulline.

Belongs to the argininosuccinate synthase family. Type 1 subfamily. In terms of assembly, homotetramer.

It localises to the cytoplasm. It carries out the reaction L-citrulline + L-aspartate + ATP = 2-(N(omega)-L-arginino)succinate + AMP + diphosphate + H(+). It functions in the pathway amino-acid biosynthesis; L-arginine biosynthesis; L-arginine from L-ornithine and carbamoyl phosphate: step 2/3. The protein is Argininosuccinate synthase of Nitratidesulfovibrio vulgaris (strain DSM 19637 / Miyazaki F) (Desulfovibrio vulgaris).